The chain runs to 290 residues: Nucleotide-binding protein Sde_3181 (290 aa).

Position 8–15 (8–15 (GRSGSGKT)) interacts with ATP. 60-63 (DARN) contacts GTP.

It belongs to the RapZ-like family.

Displays ATPase and GTPase activities. The polypeptide is Nucleotide-binding protein Sde_3181 (Saccharophagus degradans (strain 2-40 / ATCC 43961 / DSM 17024)).